The sequence spans 1264 residues: Box A-binding factor (1264 aa).

The span at Met1 to Ala11 shows a compositional bias: basic and acidic residues. 6 disordered regions span residues Met1 to Gly25, Thr161 to Lys200, Leu234 to Gln253, Gln405 to Ser463, Asn523 to Thr585, and His599 to Gln627. Gly residues predominate over residues Ala16–Gly25. Residues Thr161–Ala171 show a composition bias toward low complexity. Positions Ser189–Ser198 are enriched in polar residues. Positions Gln409 to Gln421 are enriched in basic residues. Low complexity-rich tracts occupy residues Gln422–Gln438, Ser447–Ser459, and Asn523–Gln554. Positions Gln555–His564 are enriched in basic residues. 2 stretches are compositionally biased toward low complexity: residues Asn565 to Thr585 and His599 to His614. The GATA-type zinc-finger motif lies at Cys803 to Cys827. Disordered regions lie at residues Thr841–Lys867, Asp899–Asn1048, and Glu1181–Glu1202. Composition is skewed to low complexity over residues Pro909–Ser950 and Gln985–Ser1007. The span at Thr1008–His1023 shows a compositional bias: polar residues. Low complexity-rich tracts occupy residues Asn1024 to Asn1048 and Gln1185 to His1200. 2 positions are modified to phosphoserine: Ser1208 and Ser1210.

Interacts (via GATA-type Zn-finger domain) with Bfc; this interaction enhances srp binding to the promoter of crq/croquemort.

The protein resides in the nucleus. May function as a transcriptional activator protein and may play a key role in the organogenesis of the fat body. Binds a sequence element (5'-[TA]GATAA-3') found in the larval promoters of all known alcohol dehydrogenase (ADH) genes. Acts as a homeotic gene downstream of the terminal gap gene HKB to promote morphogenesis and differentiation of anterior and posterior midgut. Together with transcriptional cofactor Bfc directly binds the promoter of phagocytic receptor crq/croquemort to upregulate its expression and stimulate efferocytosis in response to apoptotic cells, including during embryogenesis. This chain is Box A-binding factor (srp), found in Drosophila melanogaster (Fruit fly).